Reading from the N-terminus, the 274-residue chain is Formamidopyrimidine-DNA glycosylase (274 aa).

The active-site Schiff-base intermediate with DNA is Pro-2. The active-site Proton donor is the Glu-3. Residue Lys-57 is the Proton donor; for beta-elimination activity of the active site. The DNA site is built by His-92, Arg-111, and Lys-152. The FPG-type zinc finger occupies 237 to 271; the sequence is QVYGRKGEECNDCGSIIEAKVIGQRNSFYCPKCQR. Catalysis depends on Arg-261, which acts as the Proton donor; for delta-elimination activity.

This sequence belongs to the FPG family. As to quaternary structure, monomer. Zn(2+) is required as a cofactor.

It catalyses the reaction Hydrolysis of DNA containing ring-opened 7-methylguanine residues, releasing 2,6-diamino-4-hydroxy-5-(N-methyl)formamidopyrimidine.. It carries out the reaction 2'-deoxyribonucleotide-(2'-deoxyribose 5'-phosphate)-2'-deoxyribonucleotide-DNA = a 3'-end 2'-deoxyribonucleotide-(2,3-dehydro-2,3-deoxyribose 5'-phosphate)-DNA + a 5'-end 5'-phospho-2'-deoxyribonucleoside-DNA + H(+). Its function is as follows. Involved in base excision repair of DNA damaged by oxidation or by mutagenic agents. Acts as a DNA glycosylase that recognizes and removes damaged bases. Has a preference for oxidized purines, such as 7,8-dihydro-8-oxoguanine (8-oxoG). Has AP (apurinic/apyrimidinic) lyase activity and introduces nicks in the DNA strand. Cleaves the DNA backbone by beta-delta elimination to generate a single-strand break at the site of the removed base with both 3'- and 5'-phosphates. This is Formamidopyrimidine-DNA glycosylase from Glaesserella parasuis serovar 5 (strain SH0165) (Haemophilus parasuis).